The following is a 185-amino-acid chain: MNQLIISAATEGAAEANPLVPNVWEMGVVLVGFAVLMYIVVKFVVPMFEKTFAERAEAIEGGIAKAEAAQAEASAALEEYKQQLTDARAEANRIREEARAEGAQILADLKAKAAAESARITEQAHAAIESERQAAVVSLRSEVGTLATTLAGRIVGEALTDDQRAARVVDRFLADLETQSAGAAK.

Residues 28-48 form a helical membrane-spanning segment; the sequence is VVLVGFAVLMYIVVKFVVPMF.

This sequence belongs to the ATPase B chain family. As to quaternary structure, F-type ATPases have 2 components, F(1) - the catalytic core - and F(0) - the membrane proton channel. F(1) has five subunits: alpha(3), beta(3), gamma(1), delta(1), epsilon(1). F(0) has three main subunits: a(1), b(2) and c(10-14). The alpha and beta chains form an alternating ring which encloses part of the gamma chain. F(1) is attached to F(0) by a central stalk formed by the gamma and epsilon chains, while a peripheral stalk is formed by the delta and b chains.

It is found in the cell membrane. Its function is as follows. F(1)F(0) ATP synthase produces ATP from ADP in the presence of a proton or sodium gradient. F-type ATPases consist of two structural domains, F(1) containing the extramembraneous catalytic core and F(0) containing the membrane proton channel, linked together by a central stalk and a peripheral stalk. During catalysis, ATP synthesis in the catalytic domain of F(1) is coupled via a rotary mechanism of the central stalk subunits to proton translocation. Component of the F(0) channel, it forms part of the peripheral stalk, linking F(1) to F(0). The chain is ATP synthase subunit b from Paenarthrobacter aurescens (strain TC1).